Consider the following 199-residue polypeptide: Probable GTP-binding protein EngB (199 aa).

In terms of domain architecture, EngB-type G spans 28–199; sequence DLPEIALAGR…ESWDTILEYL (172 aa). Residues 36–43, 63–67, 81–84, 148–151, and 180–182 each bind GTP; these read GRSNVGKS, GKTQL, DVPG, TKAD, and FSS. Residues Ser-43 and Thr-65 each contribute to the Mg(2+) site.

It belongs to the TRAFAC class TrmE-Era-EngA-EngB-Septin-like GTPase superfamily. EngB GTPase family. Requires Mg(2+) as cofactor.

Necessary for normal cell division and for the maintenance of normal septation. The sequence is that of Probable GTP-binding protein EngB from Streptococcus equi subsp. zooepidemicus (strain H70).